Consider the following 376-residue polypeptide: Lipoyl synthase 2, mitochondrial (376 aa).

Cysteine 109, cysteine 114, cysteine 120, cysteine 140, cysteine 144, cysteine 147, and serine 356 together coordinate [4Fe-4S] cluster. The region spanning 125–345 (ETGTATATIM…QTLGMEMGFR (221 aa)) is the Radical SAM core domain.

This sequence belongs to the radical SAM superfamily. Lipoyl synthase family. The cofactor is [4Fe-4S] cluster.

The protein localises to the mitochondrion. The catalysed reaction is [[Fe-S] cluster scaffold protein carrying a second [4Fe-4S](2+) cluster] + N(6)-octanoyl-L-lysyl-[protein] + 2 oxidized [2Fe-2S]-[ferredoxin] + 2 S-adenosyl-L-methionine + 4 H(+) = [[Fe-S] cluster scaffold protein] + N(6)-[(R)-dihydrolipoyl]-L-lysyl-[protein] + 4 Fe(3+) + 2 hydrogen sulfide + 2 5'-deoxyadenosine + 2 L-methionine + 2 reduced [2Fe-2S]-[ferredoxin]. It participates in protein modification; protein lipoylation via endogenous pathway; protein N(6)-(lipoyl)lysine from octanoyl-[acyl-carrier-protein]: step 2/2. Functionally, catalyzes the radical-mediated insertion of two sulfur atoms into the C-6 and C-8 positions of the octanoyl moiety bound to the lipoyl domains of lipoate-dependent enzymes, thereby converting the octanoylated domains into lipoylated derivatives. This chain is Lipoyl synthase 2, mitochondrial, found in Pisum sativum (Garden pea).